Consider the following 112-residue polypeptide: MSNLHELKCEACHIDAPKVTDLELEEMLQGISQWRVIERDGIKQLEREFTFKNFKLAWAFSNKIAELAEAEFHHPTITLEWGKVTVCWWSHSAKGLHKNDFICAAKTDRCLE.

This sequence belongs to the pterin-4-alpha-carbinolamine dehydratase family.

It catalyses the reaction (4aS,6R)-4a-hydroxy-L-erythro-5,6,7,8-tetrahydrobiopterin = (6R)-L-erythro-6,7-dihydrobiopterin + H2O. This Photobacterium profundum (strain SS9) protein is Putative pterin-4-alpha-carbinolamine dehydratase.